A 411-amino-acid polypeptide reads, in one-letter code: Proline-responsive transcriptional activator PutR (411 aa).

Belongs to the CdaR family.

In terms of biological role, activates transcription of the putBCP operon. Requires proline as a coactivator. This is Proline-responsive transcriptional activator PutR from Bacillus subtilis (strain 168).